The following is a 445-amino-acid chain: Serine protease inhibitor A3F (445 aa).

4 N-linked (GlcNAc...) asparagine glycosylation sites follow: asparagine 28, asparagine 94, asparagine 174, and asparagine 259. Positions 357 to 382 are RCL; it reads GTEAAAGTGYQNLQCCQGVIYSMKIY.

The protein belongs to the serpin family.

This Mus musculus (Mouse) protein is Serine protease inhibitor A3F (Serpina3f).